Reading from the N-terminus, the 390-residue chain is Putative nickel insertion protein (390 aa).

It belongs to the LarC family.

The polypeptide is Putative nickel insertion protein (Geotalea daltonii (strain DSM 22248 / JCM 15807 / FRC-32) (Geobacter daltonii)).